The sequence spans 627 residues: Carene synthase 3, chloroplastic (627 aa).

A chloroplast-targeting transit peptide spans 1-36; that stretch reads MSVISIVPLASKSCLYKSLMSSTHELKALCRPIATL. Residues D378, D382, and D530 each coordinate Mg(2+). Positions 378–382 match the DDXXD motif motif; sequence DDMYD.

It belongs to the terpene synthase family. Tpsd subfamily. It depends on Mg(2+) as a cofactor. Mn(2+) serves as cofactor.

It localises to the plastid. Its subcellular location is the chloroplast. It catalyses the reaction (2E)-geranyl diphosphate = (+)-car-3-ene + diphosphate. It functions in the pathway terpene metabolism; oleoresin biosynthesis. Functionally, terpene synthase (TPS) involved in defensive oleoresin formation in conifers in response to insect attack or other injury. In Picea sitchensis (Sitka spruce), this protein is Carene synthase 3, chloroplastic (TPS-3car3).